The primary structure comprises 473 residues: UDP-N-acetylmuramate--L-alanine ligase (473 aa).

ATP is bound at residue 123–129 (GTHGKTT).

This sequence belongs to the MurCDEF family.

It localises to the cytoplasm. It catalyses the reaction UDP-N-acetyl-alpha-D-muramate + L-alanine + ATP = UDP-N-acetyl-alpha-D-muramoyl-L-alanine + ADP + phosphate + H(+). It participates in cell wall biogenesis; peptidoglycan biosynthesis. Functionally, cell wall formation. The polypeptide is UDP-N-acetylmuramate--L-alanine ligase (Marinomonas sp. (strain MWYL1)).